The chain runs to 492 residues: Protein nucleotidyltransferase YdiU (492 aa).

ATP is bound by residues G88, G90, R91, K111, D123, G124, R174, and R181. D250 functions as the Proton acceptor in the catalytic mechanism. Positions 251 and 260 each coordinate Mg(2+). Position 260 (D260) interacts with ATP.

It belongs to the SELO family. The cofactor is Mg(2+). Mn(2+) serves as cofactor.

The catalysed reaction is L-seryl-[protein] + ATP = 3-O-(5'-adenylyl)-L-seryl-[protein] + diphosphate. It carries out the reaction L-threonyl-[protein] + ATP = 3-O-(5'-adenylyl)-L-threonyl-[protein] + diphosphate. The enzyme catalyses L-tyrosyl-[protein] + ATP = O-(5'-adenylyl)-L-tyrosyl-[protein] + diphosphate. It catalyses the reaction L-histidyl-[protein] + UTP = N(tele)-(5'-uridylyl)-L-histidyl-[protein] + diphosphate. The catalysed reaction is L-seryl-[protein] + UTP = O-(5'-uridylyl)-L-seryl-[protein] + diphosphate. It carries out the reaction L-tyrosyl-[protein] + UTP = O-(5'-uridylyl)-L-tyrosyl-[protein] + diphosphate. Functionally, nucleotidyltransferase involved in the post-translational modification of proteins. It can catalyze the addition of adenosine monophosphate (AMP) or uridine monophosphate (UMP) to a protein, resulting in modifications known as AMPylation and UMPylation. This Rhodopseudomonas palustris (strain BisB5) protein is Protein nucleotidyltransferase YdiU.